Here is a 147-residue protein sequence, read N- to C-terminus: Hemoglobin subunit gamma (147 aa).

The region spanning 3–147 (HFTAEEKAAI…VANALAYKYH (145 aa)) is the Globin domain. Residues histidine 64 and histidine 93 each coordinate heme b.

This sequence belongs to the globin family. In terms of assembly, heterotetramer of two alpha chains and two gamma chains in fetal hemoglobin (Hb F). As to expression, red blood cells.

In terms of biological role, gamma chains make up the fetal hemoglobin F, in combination with alpha chains. The polypeptide is Hemoglobin subunit gamma (HBG) (Loxodonta africana (African elephant)).